Reading from the N-terminus, the 310-residue chain is Ribosomal protein L11 methyltransferase (310 aa).

Positions 153, 174, 196, and 239 each coordinate S-adenosyl-L-methionine.

This sequence belongs to the methyltransferase superfamily. PrmA family.

Its subcellular location is the cytoplasm. The enzyme catalyses L-lysyl-[protein] + 3 S-adenosyl-L-methionine = N(6),N(6),N(6)-trimethyl-L-lysyl-[protein] + 3 S-adenosyl-L-homocysteine + 3 H(+). Functionally, methylates ribosomal protein L11. This Janthinobacterium sp. (strain Marseille) (Minibacterium massiliensis) protein is Ribosomal protein L11 methyltransferase.